Reading from the N-terminus, the 294-residue chain is Flagellin B1 (294 aa).

A propeptide spanning residues 1–8 (MKTRTRKG) is cleaved from the precursor.

It belongs to the archaeal flagellin family.

The protein resides in the archaeal flagellum. In terms of biological role, flagellin is the subunit protein which polymerizes to form the filaments of archaeal flagella. This Thermococcus kodakarensis (strain ATCC BAA-918 / JCM 12380 / KOD1) (Pyrococcus kodakaraensis (strain KOD1)) protein is Flagellin B1 (flaB1).